Consider the following 157-residue polypeptide: Phosphopantetheine adenylyltransferase (157 aa).

Thr10 serves as a coordination point for substrate. Residues 10 to 11 (TF) and His18 each bind ATP. Residues Lys42, Leu74, and Arg88 each coordinate substrate. ATP contacts are provided by residues 89-91 (GLR), Glu99, and 124-130 (NAFISSS).

It belongs to the bacterial CoaD family. As to quaternary structure, homohexamer. Mg(2+) is required as a cofactor.

It localises to the cytoplasm. It carries out the reaction (R)-4'-phosphopantetheine + ATP + H(+) = 3'-dephospho-CoA + diphosphate. Its pathway is cofactor biosynthesis; coenzyme A biosynthesis; CoA from (R)-pantothenate: step 4/5. Reversibly transfers an adenylyl group from ATP to 4'-phosphopantetheine, yielding dephospho-CoA (dPCoA) and pyrophosphate. The sequence is that of Phosphopantetheine adenylyltransferase from Helicobacter acinonychis (strain Sheeba).